The primary structure comprises 269 residues: Hydroxyethylthiazole kinase (269 aa).

Met-42 contributes to the substrate binding site. Residues Arg-118 and Ser-164 each coordinate ATP. Gly-191 contacts substrate.

The protein belongs to the Thz kinase family. Mg(2+) is required as a cofactor.

It catalyses the reaction 5-(2-hydroxyethyl)-4-methylthiazole + ATP = 4-methyl-5-(2-phosphooxyethyl)-thiazole + ADP + H(+). It participates in cofactor biosynthesis; thiamine diphosphate biosynthesis; 4-methyl-5-(2-phosphoethyl)-thiazole from 5-(2-hydroxyethyl)-4-methylthiazole: step 1/1. Its function is as follows. Catalyzes the phosphorylation of the hydroxyl group of 4-methyl-5-beta-hydroxyethylthiazole (THZ). The protein is Hydroxyethylthiazole kinase of Listeria welshimeri serovar 6b (strain ATCC 35897 / DSM 20650 / CCUG 15529 / CIP 8149 / NCTC 11857 / SLCC 5334 / V8).